A 394-amino-acid chain; its full sequence is MTRSLRVLYIGLFLVLLLALGAWSLRSFFGFSTNADATVLNGRWTKAVETHYDEEFPIKRLGTNLWAALDYKLFNEGRPGVVLGRDHWLYSDEEFNPAVNEDQNLEGNYALVEGVRQKLKAQGIQLVMAIVPAKVRLYPEHLGEVKPASIHANLYQDFHARVAADKIIAPDLLGPLQQAKLGGKQVFLRTDTHWTPDGAEIAAKQLAKTIADKTPLNGEPQRFVTEAEKTEPHKGDLRLFLPLDPLFENLMPPKEPLEKRVTHLAETKGDDALFSDSETPVALVGTSYSANPNWNFVGALKQALGSDVISYAEDGHGPILPMLSYLKSDDFKNNPPQVLIWEFPERYLPVNNEIGDADPSWVAQLKQAGSRQQNMALNTPVNHQKSETPDRAQN.

Positions 1–37 (MTRSLRVLYIGLFLVLLLALGAWSLRSFFGFSTNADA) are cleaved as a signal peptide. The active site involves Asp191. Catalysis depends on His193, which acts as the Proton acceptor. Ser287 serves as the catalytic Nucleophile.

Belongs to the AlgJ family.

The protein resides in the cell inner membrane. It localises to the periplasm. It functions in the pathway glycan biosynthesis; alginate biosynthesis. Together with AlgI and AlgF, forms an inner membrane complex which probably interacts with the alginate polymerization-transport complex and adds acetyl groups at the O-2 and O-3 positions of mannuronate residues. Acetylation of alginate is important for the architecture of biofilms and increases the ability of alginate to act as a defense barrier. The polypeptide is Probable alginate O-acetylase AlgJ (algJ) (Pseudomonas fluorescens).